The sequence spans 518 residues: UPF0288 protein Mbar_A0706 (518 aa).

The protein belongs to the UPF0288 family.

The sequence is that of UPF0288 protein Mbar_A0706 from Methanosarcina barkeri (strain Fusaro / DSM 804).